We begin with the raw amino-acid sequence, 155 residues long: Perlucin (155 aa).

Disulfide bonds link Cys-2/Cys-13, Cys-30/Cys-127, and Cys-102/Cys-119. A C-type lectin domain is found at 9-128; sequence NRRSCYWFST…CQKPSHFICE (120 aa). A glycan (N-linked (GlcNAc...) asparagine) is linked at Asn-84. 2 consecutive repeat copies span residues 136 to 145 and 146 to 155.

Post-translationally, glycosylated.

In terms of biological role, may promote nucleation and/or growth of calcium carbonate crystals. Binds to D-galactose and D-mannose/D-glucose. This chain is Perlucin, found in Haliotis laevigata (Smooth Australian abalone).